Consider the following 254-residue polypeptide: Probable glucose-1-phosphate cytidylyltransferase (254 aa).

Substrate contacts are provided by residues 6 to 10, 11 to 13, Lys23, Thr103, Arg108, and Gly126; these read LCGGK and GTR. The Mg(2+) site is built by Asp127 and Asp232.

It belongs to the glucose-1-phosphate cytidylyltransferase family. Mg(2+) serves as cofactor.

The catalysed reaction is alpha-D-glucose 1-phosphate + CTP + H(+) = CDP-D-glucose + diphosphate. In terms of biological role, catalyzes the transfer of a CMP moiety from CTP to glucose 1-phosphate. The sequence is that of Probable glucose-1-phosphate cytidylyltransferase (yfnH) from Bacillus subtilis (strain 168).